The sequence spans 633 residues: DNA mismatch repair protein MutL (633 aa).

The segment at 338-407 is disordered; sequence AAPEPERTLP…VPPPTLRAIP (70 aa). A compositionally biased stretch (low complexity) spans 366–391; sequence PGSAFPAAARPAPASSAAQPPLSSSA.

This sequence belongs to the DNA mismatch repair MutL/HexB family.

In terms of biological role, this protein is involved in the repair of mismatches in DNA. It is required for dam-dependent methyl-directed DNA mismatch repair. May act as a 'molecular matchmaker', a protein that promotes the formation of a stable complex between two or more DNA-binding proteins in an ATP-dependent manner without itself being part of a final effector complex. The chain is DNA mismatch repair protein MutL from Akkermansia muciniphila (strain ATCC BAA-835 / DSM 22959 / JCM 33894 / BCRC 81048 / CCUG 64013 / CIP 107961 / Muc).